Reading from the N-terminus, the 423-residue chain is Gamma-glutamyl phosphate reductase (423 aa).

The protein belongs to the gamma-glutamyl phosphate reductase family.

The protein resides in the cytoplasm. It carries out the reaction L-glutamate 5-semialdehyde + phosphate + NADP(+) = L-glutamyl 5-phosphate + NADPH + H(+). It participates in amino-acid biosynthesis; L-proline biosynthesis; L-glutamate 5-semialdehyde from L-glutamate: step 2/2. Catalyzes the NADPH-dependent reduction of L-glutamate 5-phosphate into L-glutamate 5-semialdehyde and phosphate. The product spontaneously undergoes cyclization to form 1-pyrroline-5-carboxylate. The sequence is that of Gamma-glutamyl phosphate reductase from Burkholderia pseudomallei (strain 1710b).